A 960-amino-acid chain; its full sequence is Valine--tRNA ligase (960 aa).

A 'HIGH' region motif is present at residues 42–52; it reads PNITGNLHMGH. The short motif at 553–557 is the 'KMSKS' region element; sequence KMSKS. An ATP-binding site is contributed by K556. A coiled-coil region spans residues 879 to 950; the sequence is VLKAIDKEIE…LSQQLESLHD (72 aa).

The protein belongs to the class-I aminoacyl-tRNA synthetase family. ValS type 1 subfamily. As to quaternary structure, monomer.

It localises to the cytoplasm. The enzyme catalyses tRNA(Val) + L-valine + ATP = L-valyl-tRNA(Val) + AMP + diphosphate. In terms of biological role, catalyzes the attachment of valine to tRNA(Val). As ValRS can inadvertently accommodate and process structurally similar amino acids such as threonine, to avoid such errors, it has a 'posttransfer' editing activity that hydrolyzes mischarged Thr-tRNA(Val) in a tRNA-dependent manner. This Buchnera aphidicola subsp. Schizaphis graminum (strain Sg) protein is Valine--tRNA ligase.